The following is a 241-amino-acid chain: Small ribosomal subunit protein uS10m (241 aa).

A mitochondrion-targeting transit peptide spans Met-1–Phe-54.

It belongs to the universal ribosomal protein uS10 family. In terms of assembly, component of the mitochondrial ribosome small subunit.

It is found in the mitochondrion. In Arabidopsis thaliana (Mouse-ear cress), this protein is Small ribosomal subunit protein uS10m (RPS10).